We begin with the raw amino-acid sequence, 34 residues long: MSDINAARLPSFFFPVPCISDDIEMVLTRGESLC.

Positions 1–10 (MSDINAARLP) are excised as a propeptide. The segment at residues 11-17 (SFFFPVP) is a cross-link (cyclopeptide (Ser-Pro)). A propeptide spanning residues 18 to 34 (CISDDIEMVLTRGESLC) is cleaved from the precursor.

The protein belongs to the MSDIN fungal toxin family. Processed by the macrocyclase-peptidase enzyme POPB to yield a cyclic decapeptide. POPB first removes 10 residues from the N-terminus. Conformational trapping of the remaining peptide forces the enzyme to release this intermediate rather than proceed to macrocyclization. The enzyme rebinds the remaining peptide in a different conformation and catalyzes macrocyclization of the N-terminal 7 residues.

In terms of biological role, cyclic heptapeptide that belongs to the MSDIN-like toxin family responsible for a large number of food poisoning cases and deaths. Cycloaminide E is structurally related to other cycloamanides that are non-toxic to mammals but show immunosuppressive activity. The protein is Cycloamanide E proprotein of Amanita phalloides (Death cap).